The following is a 360-amino-acid chain: MSKQILVLPGDGIGPEIMAEAVKVLQLANEKYQLGFVLGYDELGGAAVDKYGVPLADETLERARRRCHPARRRRRSEMGRHRPGHPPGARPAENPFATGPVRQPAPGVLYPQLAEASTLRPEVVAGLDILIVRELTGGIYFGAPRESRLLANGERMAYDTLPYSESEIRRIAKVGFDMARVRGKKLCSVDKANVLASSQLWRAVVEEVAKDYPDVVLSHMYVDNAAMQLVRAPKQFDVIVTDNMFGDILSDEASMLTGSIGMLPSASLDADNKGMYEPCHGSRRPDIAGKGIANPLATILSVSMMLRYSFGQVEAANAIEQAVSKVLDQGLRTGDIWSEGCRKVGTAEMGDAVVAALATL.

The segment covering 66 to 75 (RCHPARRRRR) has biased composition (basic residues). Positions 66-101 (RCHPARRRRRSEMGRHRPGHPPGARPAENPFATGPV) are disordered. Residues Arg133 and Asp223 each contribute to the substrate site. Mg(2+)-binding residues include Asp223, Asp247, and Asp251.

Belongs to the isocitrate and isopropylmalate dehydrogenases family. LeuB type 1 subfamily. In terms of assembly, homodimer. It depends on Mg(2+) as a cofactor. Requires Mn(2+) as cofactor.

Its subcellular location is the cytoplasm. It carries out the reaction (2R,3S)-3-isopropylmalate + NAD(+) = 4-methyl-2-oxopentanoate + CO2 + NADH. The protein operates within amino-acid biosynthesis; L-leucine biosynthesis; L-leucine from 3-methyl-2-oxobutanoate: step 3/4. Catalyzes the oxidation of 3-carboxy-2-hydroxy-4-methylpentanoate (3-isopropylmalate) to 3-carboxy-4-methyl-2-oxopentanoate. The product decarboxylates to 4-methyl-2 oxopentanoate. The sequence is that of 3-isopropylmalate dehydrogenase (leuB) from Azotobacter vinelandii.